The following is a 1720-amino-acid chain: TOG array regulator of axonemal microtubules protein 1 (1720 aa).

TOG stretches follow at residues 94–312 and 352–596; these read EEDT…RRLE and PQEL…MPSS. 8 HEAT repeats span residues 175–212, 214–247, 251–289, 345–384, 390–427, 431–466, 467–504, and 506–543; these read AFSL…RSPG, VLRT…TEDL, LDLT…RLGQ, NLKF…KFNP, SSLV…RLGE, QFLG…MKEV, GPQQ…YPSE, and FDLP…SMGS. Polar residues-rich tracts occupy residues 794 to 809, 819 to 829, 842 to 852, and 868 to 877; these read FGSQ…QNPS, PVSSPRTSPKH, DNSVNFSNSWP, and LVSQKSSDPT. 3 disordered regions span residues 794 to 924, 970 to 998, and 1067 to 1087; these read FGSQ…SLLP, HSSL…ESPD, and KKIS…NPQQ. Polar residues predominate over residues 1073–1087; the sequence is AEQSPSAGSSSNPQQ. The segment at 1256 to 1425 is TOG 3; that stretch reads EIALTEALRL…YIKDSVRNLQ (170 aa). HEAT repeat units follow at residues 1294–1331 and 1335–1372; these read TKLH…YLKK and QELD…NVTP. The segment at 1430-1462 is disordered; the sequence is GEIPLDTPSAKGRRSHTGSVGNTRSSSVSRDAF. Over residues 1446-1458 the composition is skewed to polar residues; sequence TGSVGNTRSSSVS. A TOG 4 region spans residues 1484-1720; the sequence is SLESAEYLKL…LLDMTILNEL (237 aa). HEAT repeat units follow at residues 1485–1522, 1526–1563, and 1567–1605; these read LESA…NNQD, GNIV…LLRD, and PIIN…HVDN.

This sequence belongs to the Crescerin family. Interacts with ARMC9, CCDC66, CEP104 and CSPP1.

The protein localises to the cell projection. It localises to the cilium. It is found in the cytoplasm. The protein resides in the cytoskeleton. Its subcellular location is the cilium axoneme. Involved in ciliogenesis. It is required for appropriate acetylation and polyglutamylation of ciliary microtubules, and regulation of cilium length. Interacts with microtubules and promotes microtubule polymerization via its HEAT repeat domains, especially those in TOG region 2 and 4. The protein is TOG array regulator of axonemal microtubules protein 1 of Homo sapiens (Human).